The chain runs to 345 residues: N-acetyl-gamma-glutamyl-phosphate reductase (345 aa).

The active site involves Cys-149.

This sequence belongs to the NAGSA dehydrogenase family. Type 1 subfamily.

Its subcellular location is the cytoplasm. The enzyme catalyses N-acetyl-L-glutamate 5-semialdehyde + phosphate + NADP(+) = N-acetyl-L-glutamyl 5-phosphate + NADPH + H(+). The protein operates within amino-acid biosynthesis; L-arginine biosynthesis; N(2)-acetyl-L-ornithine from L-glutamate: step 3/4. In terms of biological role, catalyzes the NADPH-dependent reduction of N-acetyl-5-glutamyl phosphate to yield N-acetyl-L-glutamate 5-semialdehyde. This Janthinobacterium sp. (strain Marseille) (Minibacterium massiliensis) protein is N-acetyl-gamma-glutamyl-phosphate reductase.